Reading from the N-terminus, the 188-residue chain is Dual specificity protein phosphatase 18 (188 aa).

A Tyrosine-protein phosphatase domain is found at 19–160 (GLSQITSSLY…LIHYEFQLFG (142 aa)). Residues 95–141 (MKQGRTLLHCAAGVSRSAALCLAYLMKYHAMSLLDAHTWTKSCRPII) are sufficient for mitochondrial localization. The Phosphocysteine intermediate role is filled by cysteine 104.

Belongs to the protein-tyrosine phosphatase family. Non-receptor class dual specificity subfamily.

It localises to the cytoplasm. It is found in the nucleus. The protein resides in the mitochondrion inner membrane. It carries out the reaction O-phospho-L-tyrosyl-[protein] + H2O = L-tyrosyl-[protein] + phosphate. The catalysed reaction is O-phospho-L-seryl-[protein] + H2O = L-seryl-[protein] + phosphate. It catalyses the reaction O-phospho-L-threonyl-[protein] + H2O = L-threonyl-[protein] + phosphate. Its function is as follows. Can dephosphorylate single and diphosphorylated synthetic MAPK peptides, with preference for the phosphotyrosine and diphosphorylated forms over phosphothreonine. In vitro, dephosphorylates p-nitrophenyl phosphate (pNPP). This chain is Dual specificity protein phosphatase 18 (DUSP18), found in Bos taurus (Bovine).